A 199-amino-acid chain; its full sequence is dITP/XTP pyrophosphatase (199 aa).

8–13 (TSNINK) is a binding site for substrate. The active-site Proton acceptor is the Asp68. Asp68 contacts Mg(2+). Substrate contacts are provided by residues Ser69, 155–158 (FGYN), Lys177, and 182–183 (HR).

This sequence belongs to the HAM1 NTPase family. In terms of assembly, homodimer. Requires Mg(2+) as cofactor.

It carries out the reaction XTP + H2O = XMP + diphosphate + H(+). The catalysed reaction is dITP + H2O = dIMP + diphosphate + H(+). It catalyses the reaction ITP + H2O = IMP + diphosphate + H(+). Pyrophosphatase that catalyzes the hydrolysis of nucleoside triphosphates to their monophosphate derivatives, with a high preference for the non-canonical purine nucleotides XTP (xanthosine triphosphate), dITP (deoxyinosine triphosphate) and ITP. Seems to function as a house-cleaning enzyme that removes non-canonical purine nucleotides from the nucleotide pool, thus preventing their incorporation into DNA/RNA and avoiding chromosomal lesions. This Borrelia recurrentis (strain A1) protein is dITP/XTP pyrophosphatase.